Here is a 350-residue protein sequence, read N- to C-terminus: Protein FAM118B (350 aa).

Ala2 carries the N-acetylalanine modification. Ser9 is subject to Phosphoserine.

The protein belongs to the FAM118 family.

The protein localises to the nucleus. Its subcellular location is the cajal body. In terms of biological role, may play a role in Cajal bodies formation. The protein is Protein FAM118B (FAM118B) of Macaca fascicularis (Crab-eating macaque).